Consider the following 326-residue polypeptide: tRNA U34 carboxymethyltransferase (326 aa).

7 residues coordinate carboxy-S-adenosyl-L-methionine: Lys-91, Trp-105, Lys-110, Gly-130, Met-196, Tyr-200, and Arg-315.

The protein belongs to the class I-like SAM-binding methyltransferase superfamily. CmoB family. As to quaternary structure, homotetramer.

The enzyme catalyses carboxy-S-adenosyl-L-methionine + 5-hydroxyuridine(34) in tRNA = 5-carboxymethoxyuridine(34) in tRNA + S-adenosyl-L-homocysteine + H(+). In terms of biological role, catalyzes carboxymethyl transfer from carboxy-S-adenosyl-L-methionine (Cx-SAM) to 5-hydroxyuridine (ho5U) to form 5-carboxymethoxyuridine (cmo5U) at position 34 in tRNAs. The polypeptide is tRNA U34 carboxymethyltransferase (Tolumonas auensis (strain DSM 9187 / NBRC 110442 / TA 4)).